A 416-amino-acid polypeptide reads, in one-letter code: Tyrosine--tRNA ligase (416 aa).

Tyr39 serves as a coordination point for L-tyrosine. The short motif at Cys44–Ser53 is the 'HIGH' region element. Residues Tyr176 and Gln180 each contribute to the L-tyrosine site. Residues Lys236–Thr240 carry the 'KMSKS' region motif. Lys239 contributes to the ATP binding site. Positions Ile349–Val415 constitute an S4 RNA-binding domain.

This sequence belongs to the class-I aminoacyl-tRNA synthetase family. TyrS type 1 subfamily. In terms of assembly, homodimer.

It localises to the cytoplasm. It catalyses the reaction tRNA(Tyr) + L-tyrosine + ATP = L-tyrosyl-tRNA(Tyr) + AMP + diphosphate + H(+). Functionally, catalyzes the attachment of tyrosine to tRNA(Tyr) in a two-step reaction: tyrosine is first activated by ATP to form Tyr-AMP and then transferred to the acceptor end of tRNA(Tyr). In Wolbachia sp. subsp. Brugia malayi (strain TRS), this protein is Tyrosine--tRNA ligase.